A 327-amino-acid chain; its full sequence is Phenylalanine--tRNA ligase alpha subunit (327 aa).

E252 lines the Mg(2+) pocket.

Belongs to the class-II aminoacyl-tRNA synthetase family. Phe-tRNA synthetase alpha subunit type 1 subfamily. Tetramer of two alpha and two beta subunits. The cofactor is Mg(2+).

It localises to the cytoplasm. The enzyme catalyses tRNA(Phe) + L-phenylalanine + ATP = L-phenylalanyl-tRNA(Phe) + AMP + diphosphate + H(+). The chain is Phenylalanine--tRNA ligase alpha subunit from Vibrio campbellii (strain ATCC BAA-1116).